Reading from the N-terminus, the 203-residue chain is Putative 3-methyladenine DNA glycosylase (203 aa).

This sequence belongs to the DNA glycosylase MPG family.

This is Putative 3-methyladenine DNA glycosylase from Clostridium botulinum (strain Loch Maree / Type A3).